The following is a 655-amino-acid chain: Tumor necrosis factor receptor superfamily member 21 (655 aa).

A signal peptide spans 1-41 (MGTSASSITALASCSRIAGQVGATMVAGSLLLLGFLSTITA). Over 42 to 349 (QPEQKTLSLT…PHKHFDINEH (308 aa)) the chain is Extracellular. 4 TNFR-Cys repeats span residues 50–88 (LTGTYRHVDRTTGQVLTCDKCPAGTYVSEHCTNTSLRVC), 90–131 (SCPS…DREC), 133–167 (CPPGMYQSNGTCAPHTVCPVGWGVRKKGTENEDVR), and 170–211 (QCAR…DNVC). 9 disulfide bridges follow: Cys67/Cys80, Cys70/Cys88, Cys91/Cys106, Cys109/Cys123, Cys113/Cys131, Cys133/Cys144, Cys150/Cys168, Cys171/Cys186, and Cys192/Cys211. The N-linked (GlcNAc...) asparagine glycan is linked to Asn82. Disordered stretches follow at residues 214–306 (HLSS…GPHH) and 318–338 (EATGEKSSTAIKAPKRGHPRQ). Over residues 216 to 225 (SSSSTTPSSP) the composition is skewed to low complexity. 2 stretches are compositionally biased toward polar residues: residues 241–262 (VPSSTYEPQGMNSTDSNSTASV) and 276–302 (PDNTSSTSGKESTNRTLPNPPQLTHQQ). 3 N-linked (GlcNAc...) asparagine glycosylation sites follow: Asn252, Asn278, and Asn289. The chain crosses the membrane as a helical span at residues 350–370 (LPWMIVLFLLLVLVLIVVCSI). Cys368 carries the S-palmitoyl cysteine lipid modification. Residues 371 to 655 (RKSSRTLKKG…SVYSHLPDLL (285 aa)) lie on the Cytoplasmic side of the membrane. Residues 415 to 498 (GIDILKLVAA…DVVEKIRGLM (84 aa)) form the Death domain.

Associates with TRADD. Interacts with NGFR. Interacts with CASP8. Oxidized in response to reactive oxygen species (ROS), leading to endocytosis. As to expression, detected in brain (at protein level). Detected in corpus callosum oligodendrocytes. Detected in embryonic and adult brain.

The protein localises to the cell membrane. In terms of biological role, promotes apoptosis, possibly via a pathway that involves the activation of NF-kappa-B. Can also promote apoptosis mediated by BAX and by the release of cytochrome c from the mitochondria into the cytoplasm. Trophic-factor deprivation triggers the cleavage of surface APP by beta-secretase to release sAPP-beta which is further cleaved to release an N-terminal fragment of APP (N-APP). Negatively regulates oligodendrocyte survival, maturation and myelination. Plays a role in signaling cascades triggered by stimulation of T-cell receptors, in the adaptive immune response and in the regulation of T-cell differentiation and proliferation. Negatively regulates T-cell responses and the release of cytokines such as IL4, IL5, IL10, IL13 and IFNG by Th2 cells. Negatively regulates the production of IgG, IgM and IgM in response to antigens. May inhibit the activation of JNK in response to T-cell stimulation. Also acts as a regulator of pyroptosis: recruits CASP8 in response to reactive oxygen species (ROS) and subsequent oxidation, leading to activation of GSDMC. In Rattus norvegicus (Rat), this protein is Tumor necrosis factor receptor superfamily member 21 (Tnfrsf21).